The chain runs to 429 residues: Serine--tRNA ligase (429 aa).

Residue 235–237 (TAE) participates in L-serine binding. ATP is bound at residue 266 to 268 (RSE). L-serine is bound at residue Glu-289. Position 353–356 (353–356 (EISS)) interacts with ATP. Residue Ser-389 coordinates L-serine.

This sequence belongs to the class-II aminoacyl-tRNA synthetase family. Type-1 seryl-tRNA synthetase subfamily. As to quaternary structure, homodimer. The tRNA molecule binds across the dimer.

Its subcellular location is the cytoplasm. The catalysed reaction is tRNA(Ser) + L-serine + ATP = L-seryl-tRNA(Ser) + AMP + diphosphate + H(+). It catalyses the reaction tRNA(Sec) + L-serine + ATP = L-seryl-tRNA(Sec) + AMP + diphosphate + H(+). Its pathway is aminoacyl-tRNA biosynthesis; selenocysteinyl-tRNA(Sec) biosynthesis; L-seryl-tRNA(Sec) from L-serine and tRNA(Sec): step 1/1. Functionally, catalyzes the attachment of serine to tRNA(Ser). Is also able to aminoacylate tRNA(Sec) with serine, to form the misacylated tRNA L-seryl-tRNA(Sec), which will be further converted into selenocysteinyl-tRNA(Sec). This chain is Serine--tRNA ligase, found in Haemophilus influenzae (strain 86-028NP).